A 251-amino-acid polypeptide reads, in one-letter code: Gamma-gliadin (251 aa).

Residues 1–19 form the signal peptide; it reads MKTLLILTILAMAITIGTA. Residues 26–143 form a disordered region; sequence SSQVQWPQQQ…QQSFPQQQPP (118 aa). The span at 42-81 shows a compositional bias: low complexity; it reads QPFSQQPQQTFPQPQQTFPHQPQQQFPQPQQPQQQFLQPQ. Pro residues predominate over residues 82–99; sequence QPFPQQPQQPYPQQPQQP. Residues 100 to 139 show a composition bias toward low complexity; sequence FPQTQQPQQLFPQSQQPQQQFSQPQQQFPQPQQPQQSFPQ.

This sequence belongs to the gliadin/glutenin family.

Its function is as follows. Gliadin is the major seed storage protein in wheat. The sequence is that of Gamma-gliadin from Triticum aestivum (Wheat).